The chain runs to 172 residues: 3-hydroxydecanoyl-[acyl-carrier-protein] dehydratase (172 aa).

Residue histidine 71 is part of the active site.

It belongs to the thioester dehydratase family. FabA subfamily. As to quaternary structure, homodimer.

It localises to the cytoplasm. The catalysed reaction is a (3R)-hydroxyacyl-[ACP] = a (2E)-enoyl-[ACP] + H2O. The enzyme catalyses (3R)-hydroxydecanoyl-[ACP] = (2E)-decenoyl-[ACP] + H2O. It catalyses the reaction (2E)-decenoyl-[ACP] = (3Z)-decenoyl-[ACP]. The protein operates within lipid metabolism; fatty acid biosynthesis. Necessary for the introduction of cis unsaturation into fatty acids. Catalyzes the dehydration of (3R)-3-hydroxydecanoyl-ACP to E-(2)-decenoyl-ACP and then its isomerization to Z-(3)-decenoyl-ACP. Can catalyze the dehydratase reaction for beta-hydroxyacyl-ACPs with saturated chain lengths up to 16:0, being most active on intermediate chain length. This chain is 3-hydroxydecanoyl-[acyl-carrier-protein] dehydratase, found in Pectobacterium atrosepticum (strain SCRI 1043 / ATCC BAA-672) (Erwinia carotovora subsp. atroseptica).